Here is a 183-residue protein sequence, read N- to C-terminus: Hypoxanthine/guanine phosphoribosyltransferase (183 aa).

This sequence belongs to the purine/pyrimidine phosphoribosyltransferase family. Archaeal HPRT subfamily. Homodimer.

It is found in the cytoplasm. It carries out the reaction IMP + diphosphate = hypoxanthine + 5-phospho-alpha-D-ribose 1-diphosphate. It catalyses the reaction GMP + diphosphate = guanine + 5-phospho-alpha-D-ribose 1-diphosphate. It participates in purine metabolism; IMP biosynthesis via salvage pathway; IMP from hypoxanthine: step 1/1. Functionally, catalyzes a salvage reaction resulting in the formation of IMP that is energically less costly than de novo synthesis. The chain is Hypoxanthine/guanine phosphoribosyltransferase from Methanocaldococcus vulcanius (strain ATCC 700851 / DSM 12094 / M7) (Methanococcus vulcanius).